The chain runs to 238 residues: 3-dehydroquinate dehydratase (238 aa).

3-dehydroquinate-binding positions include 35–37 (ELR) and arginine 70. Histidine 133 (proton donor/acceptor) is an active-site residue. Lysine 160 serves as the catalytic Schiff-base intermediate with substrate. 3-dehydroquinate is bound by residues arginine 202 and glutamine 225.

Belongs to the type-I 3-dehydroquinase family. In terms of assembly, homodimer.

It catalyses the reaction 3-dehydroquinate = 3-dehydroshikimate + H2O. The protein operates within metabolic intermediate biosynthesis; chorismate biosynthesis; chorismate from D-erythrose 4-phosphate and phosphoenolpyruvate: step 3/7. Its function is as follows. Involved in the third step of the chorismate pathway, which leads to the biosynthesis of aromatic amino acids. Catalyzes the cis-dehydration of 3-dehydroquinate (DHQ) and introduces the first double bond of the aromatic ring to yield 3-dehydroshikimate. This Staphylococcus aureus (strain MSSA476) protein is 3-dehydroquinate dehydratase.